The chain runs to 367 residues: MSANSFGKLFTVTTFGESHGPAIGCVVDGCPPGLELAPEEFTHDLQRRASGKSRHTSARREADEIEILSGVYEGRTTGTPIGLLIRNTDQRSKDYSNIAQQFRPGHADYTYWQKYGIRDPRGGGRSSARETTMRVAAGVIAKKWLKQRYGVLVRGFLSQLGQIRPAGFDWDAVEDNPFFWPHAAQVPELETYMDALRKSGDSVGARVDVVAGGVPAGWGEPIYGKLDAELAAALMSINAVKGVEIGDGFASAAQKGTEHRDLITPEGFLSNHAGGILGGISTGQAVTASMVLKPTSSLRLPGATVDADGSVVDVITTGRHDPCVGIRATPIAEAMMALVLMDQALRHRAQCGDVGEVSPRIPGQVDV.

A disordered region spans residues 41–60 (FTHDLQRRASGKSRHTSARR). 2 residues coordinate NADP(+): Arg48 and Arg54. FMN is bound by residues 125–127 (RSS), 238–239 (NA), Gly278, 293–297 (KPTSS), and Arg319.

Belongs to the chorismate synthase family. As to quaternary structure, homotetramer. It depends on FMNH2 as a cofactor.

The enzyme catalyses 5-O-(1-carboxyvinyl)-3-phosphoshikimate = chorismate + phosphate. It functions in the pathway metabolic intermediate biosynthesis; chorismate biosynthesis; chorismate from D-erythrose 4-phosphate and phosphoenolpyruvate: step 7/7. Catalyzes the anti-1,4-elimination of the C-3 phosphate and the C-6 proR hydrogen from 5-enolpyruvylshikimate-3-phosphate (EPSP) to yield chorismate, which is the branch point compound that serves as the starting substrate for the three terminal pathways of aromatic amino acid biosynthesis. This reaction introduces a second double bond into the aromatic ring system. The polypeptide is Chorismate synthase (Xanthomonas euvesicatoria pv. vesicatoria (strain 85-10) (Xanthomonas campestris pv. vesicatoria)).